The primary structure comprises 381 residues: L-lactate dehydrogenase (381 aa).

The region spanning 1-380 is the FMN hydroxy acid dehydrogenase domain; sequence MIISASTDYR…SRDSLVRELG (380 aa). Tyrosine 24 is a binding site for substrate. Residues serine 106 and glutamine 127 each contribute to the FMN site. Tyrosine 129 is a binding site for substrate. Threonine 155 serves as a coordination point for FMN. A substrate-binding site is contributed by arginine 164. An FMN-binding site is contributed by lysine 251. The Proton acceptor role is filled by histidine 275. Residue arginine 278 coordinates substrate. 306–330 provides a ligand contact to FMN; that stretch reads DSGIRSGLDVVRMIALGADTVLIGR.

It belongs to the FMN-dependent alpha-hydroxy acid dehydrogenase family. As to quaternary structure, homotetramer. The cofactor is FMN.

It is found in the cell inner membrane. The enzyme catalyses (S)-lactate + A = pyruvate + AH2. Functionally, catalyzes the conversion of L-lactate to pyruvate. Is coupled to the respiratory chain. This chain is L-lactate dehydrogenase, found in Pseudomonas putida (strain W619).